The chain runs to 105 residues: Met repressor (105 aa).

Belongs to the MetJ family. In terms of assembly, homodimer.

Its subcellular location is the cytoplasm. In terms of biological role, this regulatory protein, when combined with SAM (S-adenosylmethionine) represses the expression of the methionine regulon and of enzymes involved in SAM synthesis. This Histophilus somni (strain 129Pt) (Haemophilus somnus) protein is Met repressor.